A 146-amino-acid polypeptide reads, in one-letter code: Gonadotropin subunit beta-2 (146 aa).

The first 22 residues, 1 to 22 (MTVEISKVFVLMMLNLFLGASS), serve as a signal peptide directing secretion. Disulfide bonds link cysteine 37-cysteine 85, cysteine 51-cysteine 100, cysteine 54-cysteine 138, cysteine 62-cysteine 116, cysteine 66-cysteine 118, and cysteine 121-cysteine 128. N-linked (GlcNAc...) asparagine glycosylation is present at asparagine 41.

The protein belongs to the glycoprotein hormones subunit beta family. As to quaternary structure, heterodimer of an alpha and a beta chain.

The protein localises to the secreted. Involved in gametogenesis and steroidogenesis. The protein is Gonadotropin subunit beta-2 (cgbb) of Trichopodus trichopterus (Three spot gourami).